Here is a 1388-residue protein sequence, read N- to C-terminus: DNA-directed RNA polymerase subunit beta'' (1388 aa).

Residues Cys224, Cys294, Cys301, and Cys304 each contribute to the Zn(2+) site.

Belongs to the RNA polymerase beta' chain family. RpoC2 subfamily. In terms of assembly, in plastids the minimal PEP RNA polymerase catalytic core is composed of four subunits: alpha, beta, beta', and beta''. When a (nuclear-encoded) sigma factor is associated with the core the holoenzyme is formed, which can initiate transcription. Zn(2+) serves as cofactor.

Its subcellular location is the plastid. The protein resides in the chloroplast. The enzyme catalyses RNA(n) + a ribonucleoside 5'-triphosphate = RNA(n+1) + diphosphate. In terms of biological role, DNA-dependent RNA polymerase catalyzes the transcription of DNA into RNA using the four ribonucleoside triphosphates as substrates. In Phalaenopsis aphrodite subsp. formosana (Moth orchid), this protein is DNA-directed RNA polymerase subunit beta''.